Consider the following 748-residue polypeptide: Photosystem I P700 chlorophyll a apoprotein A1 (748 aa).

8 helical membrane-spanning segments follow: residues 69–92 (IFSA…FHGA), 155–178 (LYVT…FHYH), 194–218 (LNHH…HVSL), 290–308 (VAHH…GHMY), 345–368 (WHAN…HHMY), 384–410 (LSLF…IYMV), 432–454 (AIIS…LYIH), and 529–547 (FMVH…LILL). The [4Fe-4S] cluster site is built by Cys-571 and Cys-580. A run of 2 helical transmembrane segments spans residues 587 to 608 (HVFL…HFSW) and 662 to 684 (LSAY…MFLF). His-673 is a binding site for chlorophyll a'. Met-681 and Tyr-689 together coordinate chlorophyll a. Trp-690 contacts phylloquinone. Residues 722–742 (AVGVAHYLLGGIATTWAFFLA) form a helical membrane-spanning segment.

Belongs to the PsaA/PsaB family. As to quaternary structure, the PsaA/B heterodimer binds the P700 chlorophyll special pair and subsequent electron acceptors. PSI consists of a core antenna complex that captures photons, and an electron transfer chain that converts photonic excitation into a charge separation. The eukaryotic PSI reaction center is composed of at least 11 subunits. P700 is a chlorophyll a/chlorophyll a' dimer, A0 is one or more chlorophyll a, A1 is one or both phylloquinones and FX is a shared 4Fe-4S iron-sulfur center. is required as a cofactor.

The protein localises to the plastid. The protein resides in the chloroplast thylakoid membrane. The catalysed reaction is reduced [plastocyanin] + hnu + oxidized [2Fe-2S]-[ferredoxin] = oxidized [plastocyanin] + reduced [2Fe-2S]-[ferredoxin]. In terms of biological role, psaA and PsaB bind P700, the primary electron donor of photosystem I (PSI), as well as the electron acceptors A0, A1 and FX. PSI is a plastocyanin/cytochrome c6-ferredoxin oxidoreductase, converting photonic excitation into a charge separation, which transfers an electron from the donor P700 chlorophyll pair to the spectroscopically characterized acceptors A0, A1, FX, FA and FB in turn. Oxidized P700 is reduced on the lumenal side of the thylakoid membrane by plastocyanin or cytochrome c6. This is Photosystem I P700 chlorophyll a apoprotein A1 from Cyanidioschyzon merolae (strain NIES-3377 / 10D) (Unicellular red alga).